We begin with the raw amino-acid sequence, 158 residues long: SUMO-conjugating enzyme UBC9 (158 aa).

The UBC core domain maps to isoleucine 4–proline 157. The interaction with SUMO1 stretch occupies residues arginine 13–lysine 18. Cysteine 93 acts as the Glycyl thioester intermediate in catalysis.

It belongs to the ubiquitin-conjugating enzyme family. In terms of assembly, interacts with SOX9.

The protein localises to the nucleus. Its subcellular location is the cytoplasm. The protein operates within protein modification; protein sumoylation. Functionally, accepts the ubiquitin-like proteins SUMO1, SUMO2 and SUMO3 from the UBLE1A-UBLE1B E1 complex and catalyzes their covalent attachment to other proteins with the help of an E3 ligase such as RANBP2 or CBX4. Essential for nuclear architecture and chromosome segregation. The chain is SUMO-conjugating enzyme UBC9 (UBE2I) from Gallus gallus (Chicken).